The primary structure comprises 125 residues: Large ribosomal subunit protein bL12 (125 aa).

The protein belongs to the bacterial ribosomal protein bL12 family. Homodimer. Part of the ribosomal stalk of the 50S ribosomal subunit. Forms a multimeric L10(L12)X complex, where L10 forms an elongated spine to which 2 to 4 L12 dimers bind in a sequential fashion. Binds GTP-bound translation factors.

In terms of biological role, forms part of the ribosomal stalk which helps the ribosome interact with GTP-bound translation factors. Is thus essential for accurate translation. The sequence is that of Large ribosomal subunit protein bL12 from Helicobacter acinonychis (strain Sheeba).